Reading from the N-terminus, the 554-residue chain is Glutamine--tRNA ligase (554 aa).

Residues 34–44 carry the 'HIGH' region motif; that stretch reads PEPNGYLHIGH. Residues 35–37 and 41–47 contribute to the ATP site; these read EPN and HIGHAKS. Residues aspartate 67 and tyrosine 212 each coordinate L-glutamine. Residues threonine 231, 261 to 262, and 269 to 271 each bind ATP; these read RL and MSK. The short motif at 268-272 is the 'KMSKS' region element; it reads VMSKR.

The protein belongs to the class-I aminoacyl-tRNA synthetase family. Monomer.

It is found in the cytoplasm. It catalyses the reaction tRNA(Gln) + L-glutamine + ATP = L-glutaminyl-tRNA(Gln) + AMP + diphosphate. The protein is Glutamine--tRNA ligase of Shigella boydii serotype 4 (strain Sb227).